The chain runs to 565 residues: uncharacterized protein (565 aa).

The signal sequence occupies residues 1-19 (MRWLATFVALLIAISSVSA). The segment covering 494–504 (TGAENVTNNSV) has biased composition (polar residues). Residues 494–525 (TGAENVTNNSVTATTPPAKASQQTPAPATPPV) are disordered. The span at 505 to 519 (TATTPPAKASQQTPA) shows a compositional bias: low complexity.

This is an uncharacterized protein from Archaeoglobus fulgidus (strain ATCC 49558 / DSM 4304 / JCM 9628 / NBRC 100126 / VC-16).